Here is a 775-residue protein sequence, read N- to C-terminus: 5-methyltetrahydropteroyltriglutamate--homocysteine methyltransferase (775 aa).

5-methyltetrahydropteroyltri-L-glutamate contacts are provided by residues 16-19 (REMK) and lysine 115. L-homocysteine contacts are provided by residues 435-437 (IGS) and glutamate 488. Residues 435–437 (IGS) and glutamate 488 each bind L-methionine. 5-methyltetrahydropteroyltri-L-glutamate is bound by residues 519-520 (RC) and tryptophan 565. Residue aspartate 603 participates in L-homocysteine binding. Aspartate 603 is a binding site for L-methionine. Position 609 (glutamate 609) interacts with 5-methyltetrahydropteroyltri-L-glutamate. The Zn(2+) site is built by histidine 645, cysteine 647, and glutamate 669. Histidine 698 acts as the Proton donor in catalysis. Cysteine 730 contributes to the Zn(2+) binding site.

Belongs to the vitamin-B12 independent methionine synthase family. The cofactor is Zn(2+).

It catalyses the reaction 5-methyltetrahydropteroyltri-L-glutamate + L-homocysteine = tetrahydropteroyltri-L-glutamate + L-methionine. It functions in the pathway amino-acid biosynthesis; L-methionine biosynthesis via de novo pathway; L-methionine from L-homocysteine (MetE route): step 1/1. In terms of biological role, catalyzes the transfer of a methyl group from 5-methyltetrahydrofolate to homocysteine resulting in methionine formation. This Coxiella burnetii (strain CbuG_Q212) (Coxiella burnetii (strain Q212)) protein is 5-methyltetrahydropteroyltriglutamate--homocysteine methyltransferase.